The primary structure comprises 1081 residues: FHF complex subunit HOOK-interacting protein 1A (1081 aa).

Disordered stretches follow at residues 474-496 (SEEQLLPETPCSPSSPSPPPPPA), 544-623 (PETF…DPPK), 658-770 (EKDT…ENEP), and 863-883 (EAGSSPFGVGEDTAFSSRHPV). The segment covering 486–496 (PSSPSPPPPPA) has biased composition (pro residues). The segment covering 553–564 (EESRENSGHPEA) has biased composition (basic and acidic residues). A compositionally biased stretch (polar residues) spans 567 to 576 (PQQSVRTSGQ). The span at 680–707 (EPLEDTSEQQEDTSEQLEDTSELQEDTA) shows a compositional bias: acidic residues. Polar residues-rich tracts occupy residues 727 to 738 (EAQSLPTSNGPL) and 746 to 762 (ESQPSRESSDLCQNTFS).

It belongs to the FHIP family. In terms of assembly, may be a component of the FTS/Hook/FHIP complex (FHF complex), composed of AKTIP/FTS, FHIP1B, and one or more members of the Hook family of proteins HOOK1, HOOK2, and HOOK3. May interact directly with AKTIP/FTS.

Probable component of the FTS/Hook/FHIP complex (FHF complex). FHF complex promotes the distribution of AP-4 complex to the perinuclear area of the cell. This Mus musculus (Mouse) protein is FHF complex subunit HOOK-interacting protein 1A.